Consider the following 1018-residue polypeptide: Contactin-1 (1018 aa).

A signal peptide spans 1–20 (MKMWLLFSLLVIISFKTCLS). 6 consecutive Ig-like C2-type domains span residues 41-131 (PIFE…ATLS), 137-223 (PFPP…KSVF), 241-326 (PADI…ARIY), 331-407 (PEWV…AELK), 413-500 (PTFE…GTLV), and 504-601 (PTRI…LVVR). Intrachain disulfides connect cysteine 65/cysteine 114 and cysteine 158/cysteine 211. Asparagine 208 and asparagine 258 each carry an N-linked (GlcNAc...) asparagine glycan. A disulfide bond links cysteine 263 and cysteine 310. A glycan (N-linked (GlcNAc...) asparagine) is linked at asparagine 338. 2 disulfide bridges follow: cysteine 352–cysteine 391 and cysteine 436–cysteine 484. N-linked (GlcNAc...) asparagine glycosylation is found at asparagine 457, asparagine 473, asparagine 494, and asparagine 521. Cysteines 526 and 583 form a disulfide. Asparagine 591 is a glycosylation site (N-linked (GlcNAc...) asparagine). 4 Fibronectin type-III domains span residues 606 to 704 (PPGG…TDGA), 709 to 806 (APSD…SAQD), 811 to 906 (APTA…APPS), and 907 to 1000 (QPPR…ILSP). 2 disordered regions span residues 698 to 718 (KIKT…GGGG) and 891 to 910 (PPSD…QPPR). Serine 999 carries the GPI-anchor amidated serine lipid modification. A propeptide spans 1000-1018 (PCLLGFLLPALGILVYLEF) (removed in mature form).

Belongs to the immunoglobulin superfamily. Contactin family. Monomer. Interacts with CNTNAP1 in cis form. Binds to the carbonic-anhydrase like domain of PTPRZ1. Interacts with NOTCH1 and TNR. Detected in a complex with NRCAM and PTPRB. Interacts with TASOR.

Its subcellular location is the cell membrane. Its function is as follows. Contactins mediate cell surface interactions during nervous system development. Involved in the formation of paranodal axo-glial junctions in myelinated peripheral nerves and in the signaling between axons and myelinating glial cells via its association with CNTNAP1. Participates in oligodendrocytes generation by acting as a ligand of NOTCH1. Its association with NOTCH1 promotes NOTCH1 activation through the released notch intracellular domain (NICD) and subsequent translocation to the nucleus. Interaction with TNR induces a repulsion of neurons and an inhibition of neurite outgrowth. The sequence is that of Contactin-1 (CNTN1) from Bos taurus (Bovine).